The primary structure comprises 142 residues: Large ribosomal subunit protein uL13 (142 aa).

Belongs to the universal ribosomal protein uL13 family. Part of the 50S ribosomal subunit.

Its function is as follows. This protein is one of the early assembly proteins of the 50S ribosomal subunit, although it is not seen to bind rRNA by itself. It is important during the early stages of 50S assembly. This Aliivibrio fischeri (strain ATCC 700601 / ES114) (Vibrio fischeri) protein is Large ribosomal subunit protein uL13.